Consider the following 282-residue polypeptide: MATYLIGDVHGCYDELIALLHKVEFTPGKDTLWLTGDLVARGPGSLDVLRYVKSLGDSVRLVLGNHDLHLLAVFTGISRNKPKDRLTPLLEAPDADELLNWLRRQPLLQIDEEKKLVMAHAGITPQWDLPTAKDCARDVEAVLSSDSYPFFLDAMYGDMPNNWSPELRGLGRLRFITNAFTRMRFCFPNGQLDMYSKESPEEAPAPLKPWFAIPGPVAEEYSIAFGHWASLEGKGTPEGIYALDTGCCWGGSLTCLRWEDKQYFVQPSNRHKDMGEGEAVAS.

Belongs to the Ap4A hydrolase family.

The catalysed reaction is P(1),P(4)-bis(5'-adenosyl) tetraphosphate + H2O = 2 ADP + 2 H(+). Functionally, hydrolyzes diadenosine 5',5'''-P1,P4-tetraphosphate to yield ADP. The protein is Bis(5'-nucleosyl)-tetraphosphatase, symmetrical of Shigella dysenteriae serotype 1 (strain Sd197).